A 229-amino-acid polypeptide reads, in one-letter code: Flagellar L-ring protein (229 aa).

The signal sequence occupies residues 1–23 (MLSRLGARVLYCLAGLALLASGG). The N-palmitoyl cysteine moiety is linked to residue C24. A lipid anchor (S-diacylglycerol cysteine) is attached at C24.

Belongs to the FlgH family. In terms of assembly, the basal body constitutes a major portion of the flagellar organelle and consists of four rings (L,P,S, and M) mounted on a central rod.

The protein resides in the cell outer membrane. It is found in the bacterial flagellum basal body. Its function is as follows. Assembles around the rod to form the L-ring and probably protects the motor/basal body from shearing forces during rotation. The sequence is that of Flagellar L-ring protein from Cupriavidus pinatubonensis (strain JMP 134 / LMG 1197) (Cupriavidus necator (strain JMP 134)).